The chain runs to 300 residues: Probable endonuclease 4 (300 aa).

Residues histidine 69, histidine 110, glutamate 145, aspartate 179, histidine 182, histidine 214, aspartate 227, histidine 229, and glutamate 259 each coordinate Zn(2+).

This sequence belongs to the AP endonuclease 2 family. Zn(2+) is required as a cofactor.

It carries out the reaction Endonucleolytic cleavage to 5'-phosphooligonucleotide end-products.. In terms of biological role, endonuclease IV plays a role in DNA repair. It cleaves phosphodiester bonds at apurinic or apyrimidinic (AP) sites, generating a 3'-hydroxyl group and a 5'-terminal sugar phosphate. In Lachnoclostridium phytofermentans (strain ATCC 700394 / DSM 18823 / ISDg) (Clostridium phytofermentans), this protein is Probable endonuclease 4.